Consider the following 396-residue polypeptide: Small ribosomal subunit protein mS27 (396 aa).

Belongs to the mitochondrion-specific ribosomal protein mS27 family. Component of the mitochondrial small ribosomal subunit (mt-SSU). Mature N.crassa 74S mitochondrial ribosomes consist of a small (37S) and a large (54S) subunit. The 37S small subunit contains a 16S ribosomal RNA (16S mt-rRNA) and 32 different proteins. The 54S large subunit contains a 23S rRNA (23S mt-rRNA) and 42 different proteins.

The protein localises to the mitochondrion. Component of the mitochondrial ribosome (mitoribosome), a dedicated translation machinery responsible for the synthesis of mitochondrial genome-encoded proteins, including at least some of the essential transmembrane subunits of the mitochondrial respiratory chain. The mitoribosomes are attached to the mitochondrial inner membrane and translation products are cotranslationally integrated into the membrane. This Neurospora crassa (strain ATCC 24698 / 74-OR23-1A / CBS 708.71 / DSM 1257 / FGSC 987) protein is Small ribosomal subunit protein mS27 (mrp13).